A 224-amino-acid polypeptide reads, in one-letter code: Artemin (224 aa).

The N-terminal stretch at 1–39 (MELGLAEPTALSHCLRPRWQSAWWPTLAVLALLSCVTEA) is a signal peptide. A propeptide spanning residues 40 to 111 (SLDPMSRSPA…AALRGARAAR (72 aa)) is cleaved from the precursor. A disordered region spans residues 43–124 (PMSRSPAARD…RSSRARTTDA (82 aa)). Residues 80–95 (RPPPQSPQPAPPPPGP) show a composition bias toward pro residues. Over residues 96–116 (ALQSPPAALRGARAARAGTRS) the composition is skewed to low complexity. Disulfide bonds link Cys-127/Cys-192, Cys-154/Cys-220, and Cys-158/Cys-222. N-linked (GlcNAc...) asparagine glycosylation is present at Asn-206.

Belongs to the TGF-beta family. GDNF subfamily. In terms of assembly, homodimer; disulfide-linked. Interacts with GFRA3 coreceptor and RET: forms a 2:2:2 ternary complex composed of ARTN ligand, GFRA3 and RET receptor.

The protein resides in the secreted. In terms of biological role, growth factor that supports the survival of sensory and sympathetic peripheral neurons in culture and also supports the survival of dopaminergic neurons of the ventral mid-brain. Acts by binding to its coreceptor, GFRA3, leading to autophosphorylation and activation of the RET receptor. Strong attractant of gut hematopoietic cells thus promoting the formation Peyer's patch-like structures, a major component of the gut-associated lymphoid tissue. The polypeptide is Artemin (Mus musculus (Mouse)).